The primary structure comprises 604 residues: Protein glass (604 aa).

Disordered regions lie at residues 111 to 139, 199 to 237, 359 to 400, and 414 to 434; these read ISTTPPASSGNGSSNNGAGGGSSGNHGYW, NSHNHGQMHSQHQQHQHQQSQVQASHVGNSLLQSSGGNN, LPPL…SPTS, and EDEEDSNEDLDGDEGSSGGEM. Low complexity-rich tracts occupy residues 117-126 and 200-237; these read ASSGNGSSNN and SHNHGQMHSQHQQHQHQQSQVQASHVGNSLLQSSGGNN. The span at 414-427 shows a compositional bias: acidic residues; it reads EDEEDSNEDLDGDE. 5 consecutive C2H2-type zinc fingers follow at residues 437–459, 465–487, 493–515, 521–543, and 549–571; these read NLCRLCGKTYARPSTLKTHLRTH, YRCPDCNKSFSQAANLTAHVRTH, FRCPICDRRFSQSSSVTTHMRTH, YRCSSCKKSFSDSSTLTKHLRIH, and YQCKLCLLRFSQSGNLNRHMRVH. Positions 566–604 are disordered; sequence RHMRVHGNNNSSNGSNGATGVGGESSTGSGVGGGNSLLT. Over residues 572–581 the composition is skewed to low complexity; it reads GNNNSSNGSN. The span at 582 to 604 shows a compositional bias: gly residues; that stretch reads GATGVGGESSTGSGVGGGNSLLT.

Its subcellular location is the nucleus. In terms of biological role, transcription factor required for gene expression specific to photoreceptor cells. The polypeptide is Protein glass (gl) (Drosophila melanogaster (Fruit fly)).